A 214-amino-acid polypeptide reads, in one-letter code: Osteoclast-stimulating factor 1 (214 aa).

The residue at position 2 (Ser-2) is an N-acetylserine. Positions 12-71 (GQVKVFRALYTFEPRTPDELYFEEGDIIYITDMSDTNWWKGTSKGRTGLIPSNYVAEQAE) constitute an SH3 domain. 3 ANK repeats span residues 72-101 (SIDNPLHEAAKRGNLSWLRECLDNRVGVNG), 105-135 (AGSTALYWACHGGHKDIVDMLFTQPNIELNQ), and 139-168 (LGDTALHAAAWKGYADIVQLLLAKGARTDL). Position 200 is a phosphothreonine (Thr-200). A phosphoserine mark is found at Ser-202 and Ser-213.

In terms of assembly, interacts with SRC and SMN1. Interacts with FASLG.

The protein localises to the cytoplasm. Functionally, induces bone resorption, acting probably through a signaling cascade which results in the secretion of factor(s) enhancing osteoclast formation and activity. This Sus scrofa (Pig) protein is Osteoclast-stimulating factor 1 (OSTF1).